The sequence spans 603 residues: Serine/threonine-protein kinase PLK1 (603 aa).

Positions 1–15 (MNAAAKAGKLARAPA) are enriched in low complexity. The segment at 1 to 32 (MNAAAKAGKLARAPADLGKGGVPGDAAPGAPG) is disordered. A Glycyl lysine isopeptide (Lys-Gly) (interchain with G-Cter in ubiquitin) cross-link involves residue lysine 19. The region spanning 53–305 (YVRGRFLGKG…IHELLNDEFF (253 aa)) is the Protein kinase domain. Residues 59–67 (LGKGGFAKC) and lysine 82 each bind ATP. A Phosphoserine modification is found at serine 103. ATP is bound at residue glutamate 131. Serine 137 bears the Phosphoserine mark. Aspartate 176 (proton acceptor) is an active-site residue. ATP is bound by residues 178-181 (KLGN) and aspartate 194. An activation loop region spans residues 194–221 (DFGLATKVEYEGERKKTLCGTPNYIAPE). At threonine 210 the chain carries Phosphothreonine; by AURKA. Threonine 214 bears the Phosphothreonine mark. 2 positions are modified to phosphoserine; by autocatalysis: serine 269 and serine 335. The short motif at 337–340 (RKPL) is the D-box that targets the protein for proteasomal degradation in anaphase element. Lysine 338 participates in a covalent cross-link: Glycyl lysine isopeptide (Lys-Gly) (interchain with G-Cter in SUMO2). Residues 338–361 (KPLTVLNKGVENPLPDRPREKEEP) form a disordered region. The segment covering 351–361 (LPDRPREKEEP) has biased composition (basic and acidic residues). 2 positions are modified to phosphoserine: serine 375 and serine 450. Residues 410-488 (WVSKWVDYSD…LNYFRNYMSE (79 aa)) form the POLO box 1 domain. Lysine 492 is covalently cross-linked (Glycyl lysine isopeptide (Lys-Gly) (interchain with G-Cter in ubiquitin)). Positions 493–507 (AGANITPREGDELAR) are linker. Threonine 498 is modified (phosphothreonine). Residues 510-592 (YLRTWFRTRS…ARTMVDKLLS (83 aa)) form the POLO box 2 domain. The interval 538–540 (HTK) is important for interaction with phosphorylated proteins.

The protein belongs to the protein kinase superfamily. Ser/Thr protein kinase family. CDC5/Polo subfamily. Interacts with CEP170 and EVI5. Interacts and phosphorylates ERCC6L. Interacts with FAM29A. Interacts with SLX4/BTBD12 and TTDN1. Interacts with BUB1B. Interacts (via POLO-box domain) with the phosphorylated form of BUB1, CENPU and CDC25C. Interacts with isoform 3 of SGO1. Interacts with BORA, KIF2A and AURKA. Interacts with TOPORS and CYLD. Interacts with ECT2; the interaction is stimulated upon phosphorylation of ECT2 on 'Thr-444'. Interacts with PRC1. Interacts with KIF20A/MKLP2 (when phosphorylated), leading to the recruitment at the central spindle. Interacts (via POLO box domains) with PPP1R12A/MYPT1 (when previously phosphorylated by CDK1). Part of an astrin (SPAG5)-kinastrin (SKAP) complex containing KNSTRN, SPAG5, PLK1, DYNLL1 and SGO2. Interacts with BIRC6/bruce. Interacts with CDK1-phosphorylated FRY; this interaction occurs in mitotic cells, but not in interphase cells. FRY interaction facilitates AURKA-mediated PLK1 phosphorylation. Interacts with CDK1-phosphorylated DCTN6 during mitotic prometaphase; the interaction facilitates recruitment to kinetochores. Interacts with CEP68; the interaction phosphorylates CEP68. Interacts (via POLO-box domain) with DCTN1. Interacts with CEP20 in later G1, S, G2 and M phases of the cell cycle; this interaction recruits PLK1 to centrosomes, a step required for S phase progression. Interacts with HSF1; this interaction increases upon heat shock but does not modulate neither HSF1 homotrimerization nor DNA-binding activities. Interacts with HNRNPU; this interaction induces phosphorylation of HNRNPU in mitosis. Interacts (via its N-terminus) with RIOK2. Interacts with KLHL22. Interacts (via POLO box domains) with NEDD9/HEF1 (via C-terminus). Interacts (via RVxF motif) with FIRRM; regulates PLK1 kinase activity. Interacts with SKA3; the interaction promotes the stability of PLK1. Interacts with the MTMR3:MTMR4 heterooligomer; brings CEP55 and PLK1 together during early mitosis, regulating the phosphorylation of CEP55 by PLK1 and its recruitment to the midbody where it can mediate cell abscission. In terms of processing, catalytic activity is enhanced by phosphorylation of Thr-210. Phosphorylation at Thr-210 is first detected on centrosomes in the G2 phase of the cell cycle, peaks in prometaphase and gradually disappears from centrosomes during anaphase. Dephosphorylation at Thr-210 at centrosomes is probably mediated by protein phosphatase 1C (PP1C), via interaction with PPP1R12A/MYPT1. Autophosphorylation and phosphorylation of Ser-137 may not be significant for the activation of PLK1 during mitosis, but may enhance catalytic activity during recovery after DNA damage checkpoint. Phosphorylated in vitro by STK10. Post-translationally, ubiquitinated by the anaphase promoting complex/cyclosome (APC/C) in anaphase and following DNA damage, leading to its degradation by the proteasome. Ubiquitination is mediated via its interaction with FZR1/CDH1. Ubiquitination and subsequent degradation prevents entry into mitosis and is essential to maintain an efficient G2 DNA damage checkpoint. Monoubiquitination at Lys-492 by the BCR(KLHL22) ubiquitin ligase complex does not lead to degradation: it promotes PLK1 dissociation from phosphoreceptor proteins and subsequent removal from kinetochores, allowing silencing of the spindle assembly checkpoint (SAC) and chromosome segregation.

It localises to the nucleus. It is found in the chromosome. The protein localises to the centromere. Its subcellular location is the kinetochore. The protein resides in the cytoplasm. It localises to the cytoskeleton. It is found in the microtubule organizing center. The protein localises to the centrosome. Its subcellular location is the spindle. The protein resides in the midbody. The enzyme catalyses L-seryl-[protein] + ATP = O-phospho-L-seryl-[protein] + ADP + H(+). It catalyses the reaction L-threonyl-[protein] + ATP = O-phospho-L-threonyl-[protein] + ADP + H(+). With respect to regulation, activated by phosphorylation of Thr-210 by AURKA; phosphorylation by AURKA is enhanced by BORA. Once activated, activity is stimulated by binding target proteins. Binding of target proteins has no effect on the non-activated kinase. Several inhibitors targeting PLKs are currently in development and are under investigation in a growing number of clinical trials, such as BI 2536, an ATP-competitive PLK1 inhibitor or BI 6727, a dihydropteridinone that specifically inhibits the catalytic activity of PLK1. Its function is as follows. Serine/threonine-protein kinase that performs several important functions throughout M phase of the cell cycle, including the regulation of centrosome maturation and spindle assembly, the removal of cohesins from chromosome arms, the inactivation of anaphase-promoting complex/cyclosome (APC/C) inhibitors, and the regulation of mitotic exit and cytokinesis. Polo-like kinase proteins act by binding and phosphorylating proteins that are already phosphorylated on a specific motif recognized by the POLO box domains. Phosphorylates BORA, BUB1B/BUBR1, CCNB1, CDC25C, CEP55, ECT2, ERCC6L, FBXO5/EMI1, FOXM1, KIF20A/MKLP2, CENPU, NEDD1, NINL, NPM1, NUDC, PKMYT1/MYT1, KIZ, PPP1R12A/MYPT1, PRC1, RACGAP1/CYK4, RHNO1, SGO1, STAG2/SA2, TEX14, TOPORS, p73/TP73, TPT1, WEE1 and HNRNPU. Plays a key role in centrosome functions and the assembly of bipolar spindles by phosphorylating KIZ, NEDD1 and NINL. NEDD1 phosphorylation promotes subsequent targeting of the gamma-tubulin ring complex (gTuRC) to the centrosome, an important step for spindle formation. Phosphorylation of NINL component of the centrosome leads to NINL dissociation from other centrosomal proteins. Involved in mitosis exit and cytokinesis by phosphorylating CEP55, ECT2, KIF20A/MKLP2, CENPU, PRC1 and RACGAP1. Recruited at the central spindle by phosphorylating and docking PRC1 and KIF20A/MKLP2; creates its own docking sites on PRC1 and KIF20A/MKLP2 by mediating phosphorylation of sites subsequently recognized by the POLO box domains. Phosphorylates RACGAP1, thereby creating a docking site for the Rho GTP exchange factor ECT2 that is essential for the cleavage furrow formation. Promotes the central spindle recruitment of ECT2. Plays a central role in G2/M transition of mitotic cell cycle by phosphorylating CCNB1, CDC25C, FOXM1, CENPU, PKMYT1/MYT1, PPP1R12A/MYPT1 and WEE1. Part of a regulatory circuit that promotes the activation of CDK1 by phosphorylating the positive regulator CDC25C and inhibiting the negative regulators WEE1 and PKMYT1/MYT1. Also acts by mediating phosphorylation of cyclin-B1 (CCNB1) on centrosomes in prophase. Phosphorylates FOXM1, a key mitotic transcription regulator, leading to enhance FOXM1 transcriptional activity. Involved in kinetochore functions and sister chromatid cohesion by phosphorylating BUB1B/BUBR1, FBXO5/EMI1 and STAG2/SA2. PLK1 is high on non-attached kinetochores suggesting a role of PLK1 in kinetochore attachment or in spindle assembly checkpoint (SAC) regulation. Required for kinetochore localization of BUB1B. Regulates the dissociation of cohesin from chromosomes by phosphorylating cohesin subunits such as STAG2/SA2. Phosphorylates SGO1: required for spindle pole localization of isoform 3 of SGO1 and plays a role in regulating its centriole cohesion function. Mediates phosphorylation of FBXO5/EMI1, a negative regulator of the APC/C complex during prophase, leading to FBXO5/EMI1 ubiquitination and degradation by the proteasome. Acts as a negative regulator of p53 family members: phosphorylates TOPORS, leading to inhibit the sumoylation of p53/TP53 and simultaneously enhance the ubiquitination and subsequent degradation of p53/TP53. Phosphorylates the transactivation domain of the transcription factor p73/TP73, leading to inhibit p73/TP73-mediated transcriptional activation and pro-apoptotic functions. Phosphorylates BORA, and thereby promotes the degradation of BORA. Contributes to the regulation of AURKA function. Also required for recovery after DNA damage checkpoint and entry into mitosis. Phosphorylates MISP, leading to stabilization of cortical and astral microtubule attachments required for proper spindle positioning. Together with MEIKIN, acts as a regulator of kinetochore function during meiosis I: required both for mono-orientation of kinetochores on sister chromosomes and protection of centromeric cohesin from separase-mediated cleavage. Phosphorylates CEP68 and is required for its degradation. Regulates nuclear envelope breakdown during prophase by phosphorylating DCTN1 resulting in its localization in the nuclear envelope. Phosphorylates the heat shock transcription factor HSF1, promoting HSF1 nuclear translocation upon heat shock. Phosphorylates HSF1 also in the early mitotic period; this phosphorylation regulates HSF1 localization to the spindle pole, the recruitment of the SCF(BTRC) ubiquitin ligase complex induicing HSF1 degradation, and hence mitotic progression. Regulates mitotic progression by phosphorylating RIOK2. Through the phosphorylation of DZIP1 regulates the localization during mitosis of the BBSome, a ciliary protein complex involved in cilium biogenesis. Regulates DNA repair during mitosis by mediating phosphorylation of POLQ and RHNO1, thereby promoting POLQ recruitment to DNA damage sites. Phosphorylates ATXN10 which may play a role in the regulation of cytokinesis and may stimulate the proteasome-mediated degradation of ATXN10. The polypeptide is Serine/threonine-protein kinase PLK1 (Plk1) (Rattus norvegicus (Rat)).